We begin with the raw amino-acid sequence, 563 residues long: Arginine--tRNA ligase (563 aa).

The 'HIGH' region motif lies at 121–131 (PNIAKPFSIGH).

The protein belongs to the class-I aminoacyl-tRNA synthetase family. Monomer.

Its subcellular location is the cytoplasm. The catalysed reaction is tRNA(Arg) + L-arginine + ATP = L-arginyl-tRNA(Arg) + AMP + diphosphate. The protein is Arginine--tRNA ligase of Streptococcus thermophilus (strain ATCC BAA-250 / LMG 18311).